The chain runs to 1022 residues: Translation initiation factor IF-2 (1022 aa).

Basic and acidic residues predominate over residues 82–94; that stretch reads EQSRKTLEKEQHL. Disordered stretches follow at residues 82 to 129 and 342 to 436; these read EQSR…AVPA and SENK…QREL. The segment covering 104-115 has biased composition (low complexity); the sequence is ASKSSAKGSESA. The segment covering 375 to 384 has biased composition (basic residues); that stretch reads KAKKGKKKKK. Residues 421–436 show a composition bias toward basic and acidic residues; the sequence is SEREREQEEGAAQREL. A tr-type G domain is found at 519–689; sequence TRPPVVTIMG…LTEAELRELK (171 aa). A G1 region spans residues 528-535; the sequence is GHVDHGKT. 528–535 provides a ligand contact to GTP; sequence GHVDHGKT. The segment at 553–557 is G2; that stretch reads GITQH. Residues 575-578 form a G3 region; the sequence is DTPG. GTP is bound by residues 575-579 and 629-632; these read DTPGH and NKID. The G4 stretch occupies residues 629-632; sequence NKID. The tract at residues 665 to 667 is G5; it reads SAK.

It belongs to the TRAFAC class translation factor GTPase superfamily. Classic translation factor GTPase family. IF-2 subfamily.

The protein localises to the cytoplasm. Its function is as follows. One of the essential components for the initiation of protein synthesis. Protects formylmethionyl-tRNA from spontaneous hydrolysis and promotes its binding to the 30S ribosomal subunits. Also involved in the hydrolysis of GTP during the formation of the 70S ribosomal complex. This chain is Translation initiation factor IF-2, found in Chlorobium chlorochromatii (strain CaD3).